The primary structure comprises 526 residues: tRNA-2-methylthio-N(6)-dimethylallyladenosine synthase (526 aa).

The MTTase N-terminal domain occupies 14–130 (RTYQVRTYGC…LPTLLERARH (117 aa)). The [4Fe-4S] cluster site is built by C23, C59, C93, C167, C171, and C174. The Radical SAM core domain maps to 153 to 401 (RESAYAGWVS…IELQERISLE (249 aa)). In terms of domain architecture, TRAM spans 404-483 (QAQVGRTLEL…PHHLIADGAL (80 aa)).

It belongs to the methylthiotransferase family. MiaB subfamily. In terms of assembly, monomer. [4Fe-4S] cluster is required as a cofactor.

It is found in the cytoplasm. It catalyses the reaction N(6)-dimethylallyladenosine(37) in tRNA + (sulfur carrier)-SH + AH2 + 2 S-adenosyl-L-methionine = 2-methylsulfanyl-N(6)-dimethylallyladenosine(37) in tRNA + (sulfur carrier)-H + 5'-deoxyadenosine + L-methionine + A + S-adenosyl-L-homocysteine + 2 H(+). Functionally, catalyzes the methylthiolation of N6-(dimethylallyl)adenosine (i(6)A), leading to the formation of 2-methylthio-N6-(dimethylallyl)adenosine (ms(2)i(6)A) at position 37 in tRNAs that read codons beginning with uridine. In Mycobacterium sp. (strain JLS), this protein is tRNA-2-methylthio-N(6)-dimethylallyladenosine synthase.